Consider the following 772-residue polypeptide: Protein transport protein SEC23 F (772 aa).

The Zn(2+) site is built by Cys-65, Cys-68, Cys-87, and Cys-90. The tract at residues 65–90 (CKTCKALLNAFARVDFAAMNWVCPFC) is zinc finger-like.

Belongs to the SEC23/SEC24 family. SEC23 subfamily. As to quaternary structure, component of the coat protein complex II (COPII), composed of at least five proteins: the Sec23/24 complex, the Sec13/31 complex and Sar1. Interacts with SEC24A.

The protein resides in the cytoplasmic vesicle. The protein localises to the COPII-coated vesicle membrane. It is found in the endoplasmic reticulum membrane. It localises to the membrane. Its function is as follows. Component of the coat protein complex II (COPII) which promotes the formation of transport vesicles from the endoplasmic reticulum (ER). The coat has two main functions, the physical deformation of the endoplasmic reticulum membrane into vesicles and the selection of cargo molecules. The sequence is that of Protein transport protein SEC23 F from Arabidopsis thaliana (Mouse-ear cress).